We begin with the raw amino-acid sequence, 355 residues long: Apyrase apy-1 (355 aa).

Over 1–6 the chain is Cytoplasmic; that stretch reads MTQESN. The chain crosses the membrane as a helical; Signal-anchor for type II membrane protein span at residues 7 to 29; it reads SNFFNFLLFGFVTAIAFYSGTQF. An N-linked (GlcNAc...) asparagine glycan is attached at asparagine 30. The Lumenal segment spans residues 30 to 355; it reads NKSSEQEEHI…PYKYEGIAFA (326 aa). Ca(2+) is bound by residues serine 119, glutamate 166, and glutamate 235. An N-linked (GlcNAc...) asparagine glycan is attached at asparagine 291. Glutamate 350 lines the Ca(2+) pocket.

It belongs to the apyrase family. The cofactor is Ca(2+).

The protein localises to the endomembrane system. The catalysed reaction is a ribonucleoside 5'-diphosphate + H2O = a ribonucleoside 5'-phosphate + phosphate + H(+). Hydrolyzes UDP and to a lesser extent GDP. By preventing the accumulation of NDP, may promote the reglucosylation of incompletely folded glycoproteins in the endoplasmic reticulum following the unfolded protein response. The sequence is that of Apyrase apy-1 from Caenorhabditis elegans.